Reading from the N-terminus, the 352-residue chain is Invasion chromosome antigen T (352 aa).

The protein belongs to the IcaT/YfdF family.

It localises to the secreted. May contribute to pathogenesis, although some of its characteristics suggest it is a fossil gene. The protein is Invasion chromosome antigen T of Shigella flexneri serotype 5a (strain M90T).